We begin with the raw amino-acid sequence, 116 residues long: Large ribosomal subunit protein bL20c (116 aa).

This sequence belongs to the bacterial ribosomal protein bL20 family.

The protein resides in the plastid. The protein localises to the chloroplast. Its function is as follows. Binds directly to 23S ribosomal RNA and is necessary for the in vitro assembly process of the 50S ribosomal subunit. It is not involved in the protein synthesizing functions of that subunit. The protein is Large ribosomal subunit protein bL20c of Cryptomeria japonica (Japanese cedar).